A 371-amino-acid polypeptide reads, in one-letter code: Alanine racemase (371 aa).

The active-site Proton acceptor; specific for D-alanine is the K40. K40 is modified (N6-(pyridoxal phosphate)lysine). Residue R138 participates in substrate binding. The Proton acceptor; specific for L-alanine role is filled by Y267. M314 provides a ligand contact to substrate.

Belongs to the alanine racemase family. Requires pyridoxal 5'-phosphate as cofactor.

The enzyme catalyses L-alanine = D-alanine. Its pathway is amino-acid biosynthesis; D-alanine biosynthesis; D-alanine from L-alanine: step 1/1. Catalyzes the interconversion of L-alanine and D-alanine. May also act on other amino acids. In Ligilactobacillus salivarius (strain UCC118) (Lactobacillus salivarius), this protein is Alanine racemase (alr).